The primary structure comprises 442 residues: Putative nucleotide-sugar transporter YMD8 (442 aa).

Residues 1 to 3 (MNR) lie on the Cytoplasmic side of the membrane. A helical transmembrane segment spans residues 4-24 (TVFLAFVFGWYFCSIALSIYN). Residues 25–32 (RWMFDPKD) lie on the Extracellular side of the membrane. A helical transmembrane segment spans residues 33-53 (GLGIGYPVLVTTFHQATLWLL). Over 54 to 76 (SGIYIKLRHKPVKNVLRKNNGFN) the chain is Cytoplasmic. Residues 77 to 97 (WSFFLKFLLPTAVASAGDIGL) traverse the membrane as a helical segment. Topologically, residues 98–107 (SNVSFQYVPL) are extracellular. Residue N99 is glycosylated (N-linked (GlcNAc...) asparagine). The helical transmembrane segment at 108–128 (TIYTIIKSSSIAFVLLFGCIF) threads the bilayer. Over 129–132 (KLEK) the chain is Cytoplasmic. Residues 133-153 (FHWKLALSVIIMFVGVALMVF) form a helical membrane-spanning segment. Over 154-166 (KPSDSTSTKNDQA) the chain is Extracellular. The helical transmembrane segment at 167–187 (LVIFGSFLVLASSCLSGLRWV) threads the bilayer. Residues 188 to 254 (YTQLMLRNNP…PIHTIHQLAP (67 aa)) are Cytoplasmic-facing. The residue at position 209 (S209) is a Phosphoserine. Residues 255–275 (IMGITLLLTSLLVEKPFPGIF) traverse the membrane as a helical segment. The Extracellular portion of the chain corresponds to 276-301 (SSSIFRLDTSNGGVGTETTVLSIVRG). A helical membrane pass occupies residues 302–322 (IVLLILPGFAVFLLTICEFSI). At 323–329 (LEQTPVL) the chain is on the cytoplasmic side. A helical transmembrane segment spans residues 330-350 (TVSIVGIVKELLTVIFGIIIL). Residues 351–355 (SERLS) lie on the Extracellular side of the membrane. Residues 356–376 (GFYNWLGMLIIMADVCYYNYF) traverse the membrane as a helical segment. The Cytoplasmic portion of the chain corresponds to 377-442 (RYKQDLLQKY…QNVSRSSQQV (66 aa)).

This sequence belongs to the TPT transporter family. SLC35C subfamily.

The protein resides in the golgi apparatus membrane. It localises to the cytoplasmic vesicle. It is found in the COPI-coated vesicle membrane. The protein is Putative nucleotide-sugar transporter YMD8 (YMD8) of Saccharomyces cerevisiae (strain ATCC 204508 / S288c) (Baker's yeast).